The primary structure comprises 311 residues: 4-diphosphocytidyl-2-C-methyl-D-erythritol kinase (311 aa).

Lys-9 is a catalytic residue. Residue 95 to 105 (PLGAGLAGGST) participates in ATP binding. Asp-137 is a catalytic residue.

Belongs to the GHMP kinase family. IspE subfamily.

It catalyses the reaction 4-CDP-2-C-methyl-D-erythritol + ATP = 4-CDP-2-C-methyl-D-erythritol 2-phosphate + ADP + H(+). It functions in the pathway isoprenoid biosynthesis; isopentenyl diphosphate biosynthesis via DXP pathway; isopentenyl diphosphate from 1-deoxy-D-xylulose 5-phosphate: step 3/6. In terms of biological role, catalyzes the phosphorylation of the position 2 hydroxy group of 4-diphosphocytidyl-2C-methyl-D-erythritol. This chain is 4-diphosphocytidyl-2-C-methyl-D-erythritol kinase, found in Thermosynechococcus vestitus (strain NIES-2133 / IAM M-273 / BP-1).